We begin with the raw amino-acid sequence, 679 residues long: Pollen receptor-like kinase 4 (679 aa).

Residues 1-39 (MLTWETPVMLASNTASTKKLAFITTFLIIVLCPVTMVMS) form the signal peptide. LRR repeat units follow at residues 118–141 (IKNLRTLSFMNNKFNGSMPSVKNF), 142–165 (GALKSLYLSNNRFTGEIPADAFDG), 167–191 (HHLKKLLLANNAFRGSIPSSLAYLP), 193–217 (LLELRLNGNQFHGEIPYFKQKDLKL), and 234–257 (SNMDPVSFSGNKNLCGPPLSPCSS). The span at 252–269 (LSPCSSDSGSSPDLPSSP) shows a compositional bias: low complexity. The disordered stretch occupies residues 252–271 (LSPCSSDSGSSPDLPSSPTE). Residues 278 to 298 (FFIIAIVLIVIGIILMIISLV) form a helical membrane-spanning segment. The interval 311–344 (SAYPSAGQDRTEKYNYDQSTDKDKAADSVTSYTS) is disordered. Basic and acidic residues predominate over residues 319–336 (DRTEKYNYDQSTDKDKAA). Residues 372–646 (RASAEVLGSG…RDAVEKIERL (275 aa)) enclose the Protein kinase domain. The residue at position 374 (serine 374) is a Phosphoserine. ATP-binding positions include 378–386 (LGSGSFGSS) and lysine 400. Phosphoserine occurs at positions 452 and 455. Phosphothreonine is present on threonine 472. Tyrosine 542 is modified (phosphotyrosine).

It belongs to the protein kinase superfamily. Ser/Thr protein kinase family. As to quaternary structure, interacts in vitro with ROPGEF1 (via PRONE domain). Interacts weakly with the GRI peptide. Expressed in pollen and/or in flowers, but not in leaves.

It localises to the membrane. The enzyme catalyses L-seryl-[protein] + ATP = O-phospho-L-seryl-[protein] + ADP + H(+). It carries out the reaction L-threonyl-[protein] + ATP = O-phospho-L-threonyl-[protein] + ADP + H(+). In terms of biological role, receptor-like kinase involved in the control of pollen germination and pollen tube polar growth. Can phosphorylate ROPGEF1 in vitro. This chain is Pollen receptor-like kinase 4, found in Arabidopsis thaliana (Mouse-ear cress).